The primary structure comprises 437 residues: Putative ankyrin repeat protein FPV014 (437 aa).

7 ANK repeats span residues 32 to 61 (YGCSLLHCAVENGNTEIARILLLEGANPDL), 65 to 94 (STPTALHRAVILRHYDIVNLLMEFNVDPDN), 99 to 128 (ESRTPLEYAVKLNDVKMTKTLLDYGADAED), 131 to 160 (RFNCPINDAAANGNLEICKLLIDAGARINS), 164 to 195 (GSVYTIHHAIRSGNYELVVELLSRGALPDVED), 197 to 226 (LSFSSLHHAVMEGSADMVLTLLEHGASVDV), and 230 to 259 (CGRTPLFLAANASELDIVKVLLDFWADTSV).

This Fowlpox virus (strain NVSL) (FPV) protein is Putative ankyrin repeat protein FPV014.